A 380-amino-acid chain; its full sequence is Flap endonuclease 1 (380 aa).

An N-domain region spans residues 1–104 (MGIQGLAKLI…GELAKRAERR (104 aa)). D34 serves as a coordination point for Mg(2+). DNA contacts are provided by R47 and R70. Positions 86, 158, 160, 179, and 181 each coordinate Mg(2+). Residues 122 to 253 (DVNKFQKRLV…KRAIELIRQY (132 aa)) form an I-domain region. E158 provides a ligand contact to DNA. Residues G231 and D233 each contribute to the DNA site. D233 contacts Mg(2+). Positions 328–380 (LKNARHTSTQGRLDSFFKVMSSPSVKRKEPPKGAKGSASKKAKMSGGKFKKPK) are disordered. The interval 336 to 344 (TQGRLDSFF) is interaction with PCNA. Residues 365 to 380 (ASKKAKMSGGKFKKPK) are compositionally biased toward basic residues.

This sequence belongs to the XPG/RAD2 endonuclease family. FEN1 subfamily. As to quaternary structure, interacts with PCNA. Three molecules of FEN1 bind to one PCNA trimer with each molecule binding to one PCNA monomer. PCNA stimulates the nuclease activity without altering cleavage specificity. The cofactor is Mg(2+). Post-translationally, phosphorylated. Phosphorylation upon DNA damage induces relocalization to the nuclear plasma.

Its subcellular location is the nucleus. It is found in the nucleolus. The protein resides in the nucleoplasm. The protein localises to the mitochondrion. In terms of biological role, structure-specific nuclease with 5'-flap endonuclease and 5'-3' exonuclease activities involved in DNA replication and repair. During DNA replication, cleaves the 5'-overhanging flap structure that is generated by displacement synthesis when DNA polymerase encounters the 5'-end of a downstream Okazaki fragment. It enters the flap from the 5'-end and then tracks to cleave the flap base, leaving a nick for ligation. Also involved in the long patch base excision repair (LP-BER) pathway, by cleaving within the apurinic/apyrimidinic (AP) site-terminated flap. Acts as a genome stabilization factor that prevents flaps from equilibrating into structures that lead to duplications and deletions. Also possesses 5'-3' exonuclease activity on nicked or gapped double-stranded DNA, and exhibits RNase H activity. Also involved in replication and repair of rDNA and in repairing mitochondrial DNA. The protein is Flap endonuclease 1 of Branchiostoma floridae (Florida lancelet).